The chain runs to 421 residues: Ig-like V-type domain-containing protein FAM187A (421 aa).

Positions 1-18 (MNLAHTTVLLWAWGSLQA) are cleaved as a signal peptide. Residues 19 to 377 (FEIVEKENIF…VSFSDPETRA (359 aa)) lie on the Extracellular side of the membrane. The Ig-like V-type domain occupies 268–362 (PWLPQVPIQF…IAGFRLGVTS (95 aa)). Residues C290 and C346 are joined by a disulfide bond. N318 is a glycosylation site (N-linked (GlcNAc...) asparagine). Residues 378-398 (ALGLILIGYMLITVIFISIHL) traverse the membrane as a helical segment. Over 399 to 421 (CRCCCYLFRFCPNFSPRLSRPQL) the chain is Cytoplasmic.

Belongs to the FAM187 family.

The protein localises to the membrane. The chain is Ig-like V-type domain-containing protein FAM187A (FAM187A) from Bos taurus (Bovine).